A 543-amino-acid chain; its full sequence is CTP synthase (543 aa).

The tract at residues 1–270 (MNNLTSTKFI…DTQILKHFNI (270 aa)) is amidoligase domain. Residue Ser-18 coordinates CTP. Residue Ser-18 coordinates UTP. Residues 19 to 24 (SLGKGL) and Asp-76 each bind ATP. 2 residues coordinate Mg(2+): Asp-76 and Glu-144. Residues 151-153 (DIE), 191-196 (KTKPTQ), and Lys-227 contribute to the CTP site. Residues 191 to 196 (KTKPTQ) and Lys-227 contribute to the UTP site. The Glutamine amidotransferase type-1 domain occupies 295 to 537 (TIAIIGKYIK…IQASLNYQET (243 aa)). Gly-356 provides a ligand contact to L-glutamine. Cys-383 acts as the Nucleophile; for glutamine hydrolysis in catalysis. Residues 384 to 387 (MGMQ), Glu-407, and Arg-462 each bind L-glutamine. Residues His-510 and Glu-512 contribute to the active site.

This sequence belongs to the CTP synthase family. Homotetramer.

The enzyme catalyses UTP + L-glutamine + ATP + H2O = CTP + L-glutamate + ADP + phosphate + 2 H(+). It catalyses the reaction L-glutamine + H2O = L-glutamate + NH4(+). It carries out the reaction UTP + NH4(+) + ATP = CTP + ADP + phosphate + 2 H(+). Its pathway is pyrimidine metabolism; CTP biosynthesis via de novo pathway; CTP from UDP: step 2/2. Allosterically activated by GTP, when glutamine is the substrate; GTP has no effect on the reaction when ammonia is the substrate. The allosteric effector GTP functions by stabilizing the protein conformation that binds the tetrahedral intermediate(s) formed during glutamine hydrolysis. Inhibited by the product CTP, via allosteric rather than competitive inhibition. Functionally, catalyzes the ATP-dependent amination of UTP to CTP with either L-glutamine or ammonia as the source of nitrogen. Regulates intracellular CTP levels through interactions with the four ribonucleotide triphosphates. The chain is CTP synthase from Ehrlichia ruminantium (strain Gardel).